The sequence spans 696 residues: Mitosis initiation protein fs(1)Ya (696 aa).

Disordered regions lie at residues 245-285 (NAST…RAWK), 336-379 (EHSS…YSTS), and 457-492 (IKFETPPKSSQQMRSNGEGDETKDQFFTPEPGTPEI). 2 stretches are compositionally biased toward low complexity: residues 270-281 (QQQQQQQQPLQQ) and 361-379 (SESSASEVNSGSSSSYSTS). The interval 448–696 (TGAGINKKQI…REPIERMRRQ (249 aa)) is rich in charged AA. 3 positions are modified to phosphothreonine: T478, T484, and T489. Short sequence motifs (nuclear localization signal) lie at residues 512–520 (PKKDKPKEK) and 534–538 (QPRVR). 2 disordered regions span residues 555–586 (DVGEPEVVDAEEEDEVFRPTNASTCNDKKLEA) and 603–696 (PASL…MRRQ). The segment covering 557 to 569 (GEPEVVDAEEEDE) has biased composition (acidic residues). Composition is skewed to basic and acidic residues over residues 607–624 (RGEREKDRDRDRDSDKEN) and 685–696 (RPREPIERMRRQ).

It localises to the nucleus envelope. It is found in the nucleus. The protein resides in the nucleoplasm. Its subcellular location is the cytoplasm. Functionally, cell cycle-dependent nuclear envelope component required for embryonic mitosis. The protein is Mitosis initiation protein fs(1)Ya (fs(1)Ya) of Drosophila melanogaster (Fruit fly).